Consider the following 457-residue polypeptide: Putative transposase y4bF (457 aa).

Positions 128–313 (TFHQPRLRRE…RPLNLAPDRL (186 aa)) constitute an Integrase catalytic domain. The segment at 406-440 (QDERPAPKVRTNSEKNGYTPRGRKPGKRTDFMNDP) is disordered.

The protein is Putative transposase y4bF of Sinorhizobium fredii (strain NBRC 101917 / NGR234).